We begin with the raw amino-acid sequence, 127 residues long: Large ribosomal subunit protein bL17 (127 aa).

This sequence belongs to the bacterial ribosomal protein bL17 family. As to quaternary structure, part of the 50S ribosomal subunit. Contacts protein L32.

The sequence is that of Large ribosomal subunit protein bL17 from Limosilactobacillus reuteri (strain DSM 20016) (Lactobacillus reuteri).